Reading from the N-terminus, the 578-residue chain is Probable arginine--tRNA ligase, mitochondrial (578 aa).

Residues Met-1–Val-16 constitute a mitochondrion transit peptide. L-arginine is bound by residues Ser-133–Asn-135, His-144, Tyr-322, Asp-326, and Gln-350. A 'HIGH' region motif is present at residues Ser-133–His-144. N6-acetyllysine is present on Lys-568.

Belongs to the class-I aminoacyl-tRNA synthetase family.

The protein resides in the mitochondrion membrane. It catalyses the reaction tRNA(Arg) + L-arginine + ATP = L-arginyl-tRNA(Arg) + AMP + diphosphate. Its function is as follows. Catalyzes the attachment of arginine to tRNA(Arg) in a two-step reaction: arginine is first activated by ATP to form Arg-AMP and then transferred to the acceptor end of tRNA(Arg). The chain is Probable arginine--tRNA ligase, mitochondrial (RARS2) from Pongo abelii (Sumatran orangutan).